Here is a 376-residue protein sequence, read N- to C-terminus: Glutamate 5-kinase (376 aa).

ATP is bound at residue lysine 15. Substrate-binding residues include serine 55, aspartate 142, and asparagine 154. ATP contacts are provided by residues 174–175 and 216–222; these read TD and TGGMATK. The 79-residue stretch at 281-359 folds into the PUA domain; sequence AGKVLVDAGA…AEIEQLLGYR (79 aa).

The protein belongs to the glutamate 5-kinase family.

It localises to the cytoplasm. It carries out the reaction L-glutamate + ATP = L-glutamyl 5-phosphate + ADP. The protein operates within amino-acid biosynthesis; L-proline biosynthesis; L-glutamate 5-semialdehyde from L-glutamate: step 1/2. Catalyzes the transfer of a phosphate group to glutamate to form L-glutamate 5-phosphate. The chain is Glutamate 5-kinase from Trichlorobacter lovleyi (strain ATCC BAA-1151 / DSM 17278 / SZ) (Geobacter lovleyi).